A 574-amino-acid chain; its full sequence is Sulfate adenylyltransferase (574 aa).

Residues 1-169 are N-terminal; it reads MANSPHGGVL…IEAVNKLNHY (169 aa). The tract at residues 170-394 is catalytic; the sequence is DYVALRYSPA…LRESSPPRAT (225 aa). Residue Gln-197 coordinates sulfate. Residues 197-200 and 291-294 contribute to the ATP site; these read QTRN and GRDH. Active-site residues include Thr-198, Arg-199, and Asn-200. Arg-199 contributes to the sulfate binding site. Ala-295 lines the sulfate pocket. Val-333 provides a ligand contact to ATP. An allosteric regulation domain; adenylyl-sulfate kinase-like region spans residues 395-574; that stretch reads QGFTIFLTGY…LESEGYFDRL (180 aa). Residues 434 to 437, Arg-451, 477 to 478, and Arg-516 each bind 3'-phosphoadenylyl sulfate; these read DTVR and IA.

This sequence in the N-terminal section; belongs to the sulfate adenylyltransferase family. In the C-terminal section; belongs to the APS kinase family. As to quaternary structure, homohexamer. Dimer of trimers.

The protein localises to the cytoplasm. It catalyses the reaction sulfate + ATP + H(+) = adenosine 5'-phosphosulfate + diphosphate. The protein operates within sulfur metabolism; hydrogen sulfide biosynthesis; sulfite from sulfate: step 1/3. With respect to regulation, allosterically inhibited by 3'-phosphoadenosine 5'-phosphosulfate (PAPS). In terms of biological role, catalyzes the first intracellular reaction of sulfate assimilation, forming adenosine-5'-phosphosulfate (APS) from inorganic sulfate and ATP. Plays an important role in sulfate activation as a component of the biosynthesis pathway of sulfur-containing amino acids. This Aspergillus terreus (strain NIH 2624 / FGSC A1156) protein is Sulfate adenylyltransferase.